The following is a 238-amino-acid chain: Fish-egg lectin (238 aa).

Tandem repeats lie at residues 1–34 (LDCTVIDGNLKQIDAGSGSVVGVNNLNETFVLID), 35–68 (NVFTKISGSLKHFSVGPAGQLGVNTANNIFKYQS), 69–106 (GGFVQLAGLLKQVDAGGDQIIAGVNMYDDIYCLNMDAN), 107–156 (NKWP…CSGS), and 157–199 (GSFI…KPDG). Residues 1-199 (LDCTVIDGNL…TGVTRSKPDG (199 aa)) are 5 X approximate tandem repeats. 4 disulfides stabilise this stretch: cysteine 3–cysteine 234, cysteine 100–cysteine 153, cysteine 128–cysteine 133, and cysteine 208–cysteine 226. Asparagine 27 carries N-linked (GlcNAc...) asparagine glycosylation.

It belongs to the tectonin family. In terms of tissue distribution, expressed in the eggs.

Its subcellular location is the secreted. Functionally, lipopolysaccharide-binding protein with a very low agglutinating activity for human A-type erythrocytes and interacts with both Gram-positive and Gram-negative bacteria. This chain is Fish-egg lectin, found in Cyprinus carpio (Common carp).